Consider the following 386-residue polypeptide: Queuine tRNA-ribosyltransferase (386 aa).

The Proton acceptor role is filled by aspartate 102. Substrate is bound by residues 102–106 (DSGGY), aspartate 156, glutamine 203, and glycine 230. Positions 261–267 (GVGKPDD) are RNA binding. Aspartate 280 (nucleophile) is an active-site residue. The RNA binding; important for wobble base 34 recognition stretch occupies residues 285-289 (TRSGR). Cysteine 318, cysteine 320, cysteine 323, and histidine 349 together coordinate Zn(2+).

It belongs to the queuine tRNA-ribosyltransferase family. As to quaternary structure, homodimer. Within each dimer, one monomer is responsible for RNA recognition and catalysis, while the other monomer binds to the replacement base PreQ1. Requires Zn(2+) as cofactor.

The enzyme catalyses 7-aminomethyl-7-carbaguanine + guanosine(34) in tRNA = 7-aminomethyl-7-carbaguanosine(34) in tRNA + guanine. The protein operates within tRNA modification; tRNA-queuosine biosynthesis. In terms of biological role, catalyzes the base-exchange of a guanine (G) residue with the queuine precursor 7-aminomethyl-7-deazaguanine (PreQ1) at position 34 (anticodon wobble position) in tRNAs with GU(N) anticodons (tRNA-Asp, -Asn, -His and -Tyr). Catalysis occurs through a double-displacement mechanism. The nucleophile active site attacks the C1' of nucleotide 34 to detach the guanine base from the RNA, forming a covalent enzyme-RNA intermediate. The proton acceptor active site deprotonates the incoming PreQ1, allowing a nucleophilic attack on the C1' of the ribose to form the product. After dissociation, two additional enzymatic reactions on the tRNA convert PreQ1 to queuine (Q), resulting in the hypermodified nucleoside queuosine (7-(((4,5-cis-dihydroxy-2-cyclopenten-1-yl)amino)methyl)-7-deazaguanosine). The sequence is that of Queuine tRNA-ribosyltransferase from Zymomonas mobilis subsp. mobilis (strain ATCC 31821 / ZM4 / CP4).